A 94-amino-acid polypeptide reads, in one-letter code: Aspartyl/glutamyl-tRNA(Asn/Gln) amidotransferase subunit C (94 aa).

This sequence belongs to the GatC family. Heterotrimer of A, B and C subunits.

The catalysed reaction is L-glutamyl-tRNA(Gln) + L-glutamine + ATP + H2O = L-glutaminyl-tRNA(Gln) + L-glutamate + ADP + phosphate + H(+). It carries out the reaction L-aspartyl-tRNA(Asn) + L-glutamine + ATP + H2O = L-asparaginyl-tRNA(Asn) + L-glutamate + ADP + phosphate + 2 H(+). Its function is as follows. Allows the formation of correctly charged Asn-tRNA(Asn) or Gln-tRNA(Gln) through the transamidation of misacylated Asp-tRNA(Asn) or Glu-tRNA(Gln) in organisms which lack either or both of asparaginyl-tRNA or glutaminyl-tRNA synthetases. The reaction takes place in the presence of glutamine and ATP through an activated phospho-Asp-tRNA(Asn) or phospho-Glu-tRNA(Gln). The sequence is that of Aspartyl/glutamyl-tRNA(Asn/Gln) amidotransferase subunit C from Caldicellulosiruptor bescii (strain ATCC BAA-1888 / DSM 6725 / KCTC 15123 / Z-1320) (Anaerocellum thermophilum).